Consider the following 353-residue polypeptide: Putative actin-28 (353 aa).

This sequence belongs to the actin family.

The protein localises to the cytoplasm. Its subcellular location is the cytoskeleton. The enzyme catalyses ATP + H2O = ADP + phosphate + H(+). Its function is as follows. Actins are highly conserved proteins that are involved in various types of cell motility and are ubiquitously expressed in all eukaryotic cells. Multiple isoforms are involved in various cellular functions such as cytoskeleton structure, cell mobility, chromosome movement and muscle contraction. This Dictyostelium discoideum (Social amoeba) protein is Putative actin-28 (act28).